A 1028-amino-acid chain; its full sequence is Antigenic heat-stable 120 kDa protein (1028 aa).

Polar residues-rich tracts occupy residues 359-384 and 391-400; these read GQSK…QYKQ and PTNQPLQPET. A disordered region spans residues 359 to 405; it reads GQSKEQPLITPQQTTSSSVEPPQYKQQVPPITPTNQPLQPETSQMQQ.

The protein localises to the cytoplasm. The chain is Antigenic heat-stable 120 kDa protein (sca4) from Rickettsia africae.